A 409-amino-acid polypeptide reads, in one-letter code: MVLSQRQREELNQAIADYLGTNGYADSLEAFRKEADLSTEAEKKFGGLLEKKWTSVIRLQKKVMELEAKLTEAEKEVIEGAPTKNKRTPGEWIPRPPEKYSLTGHRASITRVIFHPIFGLMVSASEDATIKIWDFETGEYERSLKGHTDSVQDVAFDAQGKLLVSCSADLSIKLWDFQQSYACVKTMHGHDHNVSSVAFVPAGDYVLSASRDRTIKMWEVATGYCVKTYTGHREWVRMVRVHIEGSLFATCSNDHTIRVWLTNSKDCKVELRDHEHTVECIAWAPEAAASAINEAAGADNKKGHHQGPFLASGSRDKTIRIWDVSVGLCLLTLNGHDNWVRGLAFHPGGKYLVSASDDKTIRVWDLRNKRCMKTLYAHQHFCTSIDFHKAHPYVISGSVDQTVKVWECR.

The 33-residue stretch at 7–39 folds into the LisH domain; it reads QREELNQAIADYLGTNGYADSLEAFRKEADLST. Residues 54–81 adopt a coiled-coil conformation; it reads TSVIRLQKKVMELEAKLTEAEKEVIEGA. WD repeat units lie at residues 104–145, 146–185, 189–228, 231–270, 273–332, 335–374, and 377–409; these read GHRA…RSLK, GHTD…ACVK, GHDH…CVKT, GHRE…CKVE, DHEH…CLLT, GHDN…CMKT, and AHQH…WECR.

This sequence belongs to the WD repeat LIS1/nudF family.

It localises to the cytoplasm. It is found in the cytoskeleton. The protein resides in the microtubule organizing center. Its subcellular location is the centrosome. Its function is as follows. Positively regulates the activity of the minus-end directed microtubule motor protein dynein. May enhance dynein-mediated microtubule sliding by targeting dynein to the microtubule plus end. Required for several dynein- and microtubule-dependent processes. This is Lissencephaly-1 homolog from Drosophila willistoni (Fruit fly).